The primary structure comprises 189 residues: MSTAPSPTITSPTQTSPVVINKSLICQDSTVSNGVQIAIGTVLHPRSSIIISEGAGPIIIGENNIIEELVQIVNKSPEPMIIGSNNLFEVGSYIECKSIGNGNVFEPKCKILKNTIIKDQCSIGAGCIVSEDKICENNTIIAQTQNSQIQTTSTLPYDHHSSIHMTHLELLHKSIPLFHTIKKTPILEK.

The protein belongs to the dynactin subunits 5/6 family. Dynactin subunit 6 subfamily. Subunit of dynactin, a multiprotein complex part of a tripartite complex with dynein and a adapter, such as BICDL1, BICD2 or HOOK3. The dynactin complex is built around ACTR1A/ACTB filament and consists of an actin-related filament composed of a shoulder domain, a pointed end and a barbed end.

It is found in the cytoplasm. The protein resides in the cytoskeleton. Its function is as follows. Part of the dynactin complex that activates the molecular motor dynein for ultra-processive transport along microtubules. The polypeptide is Dynactin subunit 6 (dynF) (Dictyostelium discoideum (Social amoeba)).